Here is a 453-residue protein sequence, read N- to C-terminus: Oocyte zinc finger protein XlCOF6 (453 aa).

14 consecutive C2H2-type zinc fingers follow at residues 6–29 (FICS…CGKH), 67–89 (FTCT…HKTH), 95–117 (FTCM…YKAH), 123–145 (VRCT…KRLH), 151–173 (FTCT…HKTH), 179–201 (FACT…QRTH), 207–229 (FTCT…RRTH), 235–257 (FTCT…HKTH), 263–285 (FTCT…QITH), 291–313 (FTCT…HKTH), 319–341 (FACT…QRTH), 375–397 (FTCT…HKTH), 403–425 (FTCT…QRTH), and 431–453 (FTCT…RITH).

The protein belongs to the krueppel C2H2-type zinc-finger protein family.

It is found in the nucleus. Its function is as follows. May be involved in transcriptional regulation. The chain is Oocyte zinc finger protein XlCOF6 from Xenopus laevis (African clawed frog).